We begin with the raw amino-acid sequence, 129 residues long: Ergosterol biosynthetic protein 28 (129 aa).

The next 4 membrane-spanning stretches (helical) occupy residues 4–24, 46–66, 71–91, and 96–116; these read LGYW…FGFF, TFGV…FNLE, YLAT…EYLF, and TIAN…WMLL.

This sequence belongs to the ERG28 family.

It localises to the endoplasmic reticulum membrane. This Arabidopsis thaliana (Mouse-ear cress) protein is Ergosterol biosynthetic protein 28.